The sequence spans 288 residues: MILLALPNKGRISKPVNEILEKAGLKISVHGRSLFAQTVDPEIKVMFARAKDIPEFVRDGVADVGVTGYDLMLERDTEEELEMLLDFKFGNARLVIAAPENSTVNSIEDVKDGMKIATEFPGLTKRYLEKKGLNLEIIELSGATEIAPFIGVSDLICDLTSTGTTLQLNRLKEVENVVSSTTRLVANKKSMDDPEKSAKINQVLSGIKSVLYAQSKRLIMMNAPKDKVSEITSIIPGMGGPTVSEILSNDKMLAINAVIDENKVFETVTNLERLGARDILVVPIERIL.

The protein belongs to the ATP phosphoribosyltransferase family. Long subfamily. It depends on Mg(2+) as a cofactor.

Its subcellular location is the cytoplasm. The enzyme catalyses 1-(5-phospho-beta-D-ribosyl)-ATP + diphosphate = 5-phospho-alpha-D-ribose 1-diphosphate + ATP. It participates in amino-acid biosynthesis; L-histidine biosynthesis; L-histidine from 5-phospho-alpha-D-ribose 1-diphosphate: step 1/9. With respect to regulation, feedback inhibited by histidine. In terms of biological role, catalyzes the condensation of ATP and 5-phosphoribose 1-diphosphate to form N'-(5'-phosphoribosyl)-ATP (PR-ATP). Has a crucial role in the pathway because the rate of histidine biosynthesis seems to be controlled primarily by regulation of HisG enzymatic activity. In Methanococcus maripaludis (strain C5 / ATCC BAA-1333), this protein is ATP phosphoribosyltransferase.